The sequence spans 741 residues: Wall-associated receptor kinase 3 (741 aa).

Residues Met1–Gly23 form the signal peptide. The Extracellular segment spans residues Gln24 to Arg342. Residues Asn37, Asn59, Asn78, Asn100, Asn103, Asn141, Asn192, Asn199, Asn232, Asn246, Asn261, and Asn266 are each glycosylated (N-linked (GlcNAc...) asparagine). In terms of domain architecture, EGF-like 1 spans Gly245–Lys292. Disulfide bonds link Cys249–Cys264, Cys258–Cys275, Cys277–Cys291, Cys297–Cys310, Cys304–Cys319, and Cys321–Cys333. Residues Asp293 to Thr334 form the EGF-like 2; calcium-binding domain. An N-linked (GlcNAc...) asparagine glycan is attached at Asn303. N-linked (GlcNAc...) asparagine glycosylation is present at Asn328. Residues Ile343–His363 traverse the membrane as a helical segment. Residues Ala364–Arg741 lie on the Cytoplasmic side of the membrane. The residue at position 404 (Thr404) is a Phosphothreonine. Residues Tyr415–Ser698 form the Protein kinase domain. ATP-binding positions include Leu421–Val429 and Lys443. The residue at position 488 (Tyr488) is a Phosphotyrosine. Asp540 functions as the Proton acceptor in the catalytic mechanism. Phosphothreonine is present on residues Thr574 and Thr579. Tyr587 is subject to Phosphotyrosine.

It belongs to the protein kinase superfamily. Ser/Thr protein kinase family. Predominantly expressed in green tissues such as stems and leaves.

The protein localises to the membrane. It carries out the reaction L-seryl-[protein] + ATP = O-phospho-L-seryl-[protein] + ADP + H(+). The catalysed reaction is L-threonyl-[protein] + ATP = O-phospho-L-threonyl-[protein] + ADP + H(+). In terms of biological role, serine/threonine-protein kinase that may function as a signaling receptor of extracellular matrix component. Binding to pectin may have significance in the control of cell expansion, morphogenesis and development. The polypeptide is Wall-associated receptor kinase 3 (WAK3) (Arabidopsis thaliana (Mouse-ear cress)).